Here is a 378-residue protein sequence, read N- to C-terminus: TelA-like protein SAUSA300_1299 (378 aa).

It belongs to the TelA family.

The protein is TelA-like protein SAUSA300_1299 of Staphylococcus aureus (strain USA300).